A 244-amino-acid polypeptide reads, in one-letter code: Phosphoadenosine 5'-phosphosulfate reductase (244 aa).

The active-site Nucleophile; cysteine thiosulfonate intermediate is the Cys239.

This sequence belongs to the PAPS reductase family. CysH subfamily.

The protein resides in the cytoplasm. It carries out the reaction [thioredoxin]-disulfide + sulfite + adenosine 3',5'-bisphosphate + 2 H(+) = [thioredoxin]-dithiol + 3'-phosphoadenylyl sulfate. The protein operates within sulfur metabolism; hydrogen sulfide biosynthesis; sulfite from sulfate: step 3/3. In terms of biological role, catalyzes the formation of sulfite from phosphoadenosine 5'-phosphosulfate (PAPS) using thioredoxin as an electron donor. The protein is Phosphoadenosine 5'-phosphosulfate reductase of Salmonella heidelberg (strain SL476).